Reading from the N-terminus, the 129-residue chain is uncharacterized protein (129 aa).

Belongs to the asfivirus C129R family.

The protein resides in the virion. Its function is as follows. Plays a role in the inhibition of type I interferon signaling pathway. Mechanistically, specifically interacts with 2',3'-cGAMP and cleaves it via its phosphodiesterase activity. In turn, prevents 2',3'-cGAMP interaction with host ER-resident STING1 leading to inhibition of downstream signaling pathway and type I interferon production. This is an uncharacterized protein from Ornithodoros (relapsing fever ticks).